Consider the following 503-residue polypeptide: Aromatase (503 aa).

A run of 2 helical transmembrane segments spans residues 19–39 (EVMP…FFVW) and 51–71 (GYCM…MGLG). Positions 294 to 324 (ENVNQCILEMMIAAPDTLSVTVFFMLCLIAQ) are substrate-binding pocket. 2 residues coordinate substrate: D309 and M374. C437 is a binding site for heme.

This sequence belongs to the cytochrome P450 family. Heme serves as cofactor. As to expression, expressed in placenta. Highly expressed in follicles (0 hour:hCG), followed by a drop (12-24 hour:hCG) and by an increase (30-39 hour:hCG). Highly expressed in corpora lutea. Also expressed in granulosa cell layer. Not expressed in theca interna.

It localises to the endoplasmic reticulum membrane. It is found in the microsome membrane. It carries out the reaction testosterone + 3 reduced [NADPH--hemoprotein reductase] + 3 O2 = 17beta-estradiol + formate + 3 oxidized [NADPH--hemoprotein reductase] + 4 H2O + 4 H(+). It catalyses the reaction androst-4-ene-3,17-dione + 3 reduced [NADPH--hemoprotein reductase] + 3 O2 = estrone + formate + 3 oxidized [NADPH--hemoprotein reductase] + 4 H2O + 4 H(+). The catalysed reaction is androst-4-ene-3,17-dione + reduced [NADPH--hemoprotein reductase] + O2 = 19-hydroxyandrost-4-ene-3,17-dione + oxidized [NADPH--hemoprotein reductase] + H2O + H(+). The enzyme catalyses 19-hydroxyandrost-4-ene-3,17-dione + reduced [NADPH--hemoprotein reductase] + O2 = 19-oxo-androst-4-ene-3,17-dione + oxidized [NADPH--hemoprotein reductase] + 2 H2O + H(+). It carries out the reaction 19-oxo-androst-4-ene-3,17-dione + reduced [NADPH--hemoprotein reductase] + O2 = estrone + formate + oxidized [NADPH--hemoprotein reductase] + H2O + 2 H(+). It catalyses the reaction estrone + reduced [NADPH--hemoprotein reductase] + O2 = 2-hydroxyestrone + oxidized [NADPH--hemoprotein reductase] + H2O + H(+). The catalysed reaction is 17beta-hydroxy-5alpha-androstan-3-one + reduced [NADPH--hemoprotein reductase] + O2 = 17beta,19-dihydroxy-3-oxo-5alpha-androstanone + oxidized [NADPH--hemoprotein reductase] + H2O + H(+). The enzyme catalyses 17beta,19-dihydroxy-3-oxo-5alpha-androstanone + reduced [NADPH--hemoprotein reductase] + O2 = 17beta-hydroxy-3,19-dioxo-5alpha-androstanone + oxidized [NADPH--hemoprotein reductase] + 2 H2O + H(+). It carries out the reaction 17beta-hydroxy-3,19-dioxo-5alpha-androstanone + reduced [NADPH--hemoprotein reductase] + O2 = 17beta-hydroxy-3-oxo-19-nor-5alpha-androst-1-ene + formate + oxidized [NADPH--hemoprotein reductase] + H2O + 2 H(+). It functions in the pathway steroid hormone biosynthesis. Its function is as follows. A cytochrome P450 monooxygenase that catalyzes the conversion of C19 androgens, androst-4-ene-3,17-dione (androstenedione) and testosterone to the C18 estrogens, estrone and estradiol, respectively. Catalyzes three successive oxidations of C19 androgens: two conventional oxidations at C19 yielding 19-hydroxy and 19-oxo/19-aldehyde derivatives, followed by a third oxidative aromatization step that involves C1-beta hydrogen abstraction combined with cleavage of the C10-C19 bond to yield a phenolic A ring and formic acid. Alternatively, the third oxidative reaction yields a 19-norsteroid and formic acid. Converts dihydrotestosterone to delta1,10-dehydro 19-nordihydrotestosterone and may play a role in homeostasis of this potent androgen. Also displays 2-hydroxylase activity toward estrone. Mechanistically, uses molecular oxygen inserting one oxygen atom into a substrate, and reducing the second into a water molecule, with two electrons provided by NADPH via cytochrome P450 reductase (CPR; NADPH-ferrihemoprotein reductase). This is Aromatase (CYP19A1) from Equus caballus (Horse).